The chain runs to 629 residues: tRNA uridine 5-carboxymethylaminomethyl modification enzyme MnmG (629 aa).

FAD-binding positions include G13–G18, V125, and S180. Position 273-287 (G273–F287) interacts with NAD(+). Q370 lines the FAD pocket.

This sequence belongs to the MnmG family. Homodimer. Heterotetramer of two MnmE and two MnmG subunits. FAD serves as cofactor.

The protein resides in the cytoplasm. NAD-binding protein involved in the addition of a carboxymethylaminomethyl (cmnm) group at the wobble position (U34) of certain tRNAs, forming tRNA-cmnm(5)s(2)U34. The polypeptide is tRNA uridine 5-carboxymethylaminomethyl modification enzyme MnmG (Pasteurella multocida (strain Pm70)).